We begin with the raw amino-acid sequence, 328 residues long: V-type sodium ATPase subunit C (328 aa).

The protein belongs to the V-ATPase V0D/AC39 subunit family.

Functionally, involved in ATP-driven sodium extrusion. The chain is V-type sodium ATPase subunit C (ntpC) from Enterococcus hirae (strain ATCC 9790 / DSM 20160 / JCM 8729 / LMG 6399 / NBRC 3181 / NCIMB 6459 / NCDO 1258 / NCTC 12367 / WDCM 00089 / R).